We begin with the raw amino-acid sequence, 994 residues long: Zinc finger protein basonuclin-1 (994 aa).

A disordered region spans residues 1–29 (MRRRPPSRGGRGAARARETRRQPRHRSGR). The hydrophobic stretch occupies residues 240-249 (MTFMLPFQFF). 2 consecutive C2H2-type zinc fingers follow at residues 357 to 380 (VFCT…NAVH) and 385 to 414 (HKCT…PRLH). Disordered regions lie at residues 402 to 425 (RNRH…RDKD) and 444 to 472 (TVTS…FPNI). The Nuclear localization signal motif lies at 533-539 (PKKKSRK). Phosphoserine occurs at positions 537 and 541. Residues 555–639 (NEKRHNLSSD…HNSERETEQT (85 aa)) form a disordered region. The span at 563–578 (SDEDMPLQVVSEDEQE) shows a compositional bias: acidic residues. Residues 603–614 (PEGERPCHRESV) show a composition bias toward basic and acidic residues. Over residues 615-630 (IESSGAISQTPEQATH) the composition is skewed to polar residues. C2H2-type zinc fingers lie at residues 720–743 (FQCD…KNMH) and 748–775 (HTCT…LNLH). The span at 859-877 (STTSSMKSESSSHSSWDSD) shows a compositional bias: low complexity. The segment at 859 to 881 (STTSSMKSESSSHSSWDSDGVSE) is disordered. C2H2-type zinc fingers lie at residues 928–951 (ITCH…KTVH) and 956–983 (HKCK…PNLH). A disordered region spans residues 970 to 994 (VRSRNRHSQNPNLHKSLASSPSHLQ).

As to quaternary structure, interacts with HSF2BP (via C-terminus). Post-translationally, phosphorylation on Ser-537 and Ser-541 leads to cytoplasmic localization. In terms of tissue distribution, in epidermis, primarily detected in cells of the basal or immediately suprabasal layers (at protein level). In hair follicles, mainly expressed in the outer root sheath (at protein level). Expressed in epidermis, testis and foreskin, and to a lower extent in thymus, spleen, mammary glands, placenta, brain and heart. Expressed in the ovary, notably in oocytes.

The protein resides in the nucleus. It is found in the cytoplasm. It localises to the nucleoplasm. In terms of biological role, transcriptional activator. It is likely involved in the regulation of keratinocytes terminal differentiation in squamous epithelia and hair follicles. Required for the maintenance of spermatogenesis. It is involved in the positive regulation of oocyte maturation, probably acting through the control of BMP15 levels and regulation of AKT signaling cascade. May also play a role in the early development of embryos. This Homo sapiens (Human) protein is Zinc finger protein basonuclin-1 (BNC1).